Consider the following 506-residue polypeptide: Peptidyl-prolyl cis-trans isomerase CYP59 (506 aa).

Residues Met-1–Ile-161 enclose the PPIase cyclophilin-type domain. The 79-residue stretch at Asn-243–Ser-321 folds into the RRM domain. The CCHC-type zinc finger occupies Gly-341–Gly-357. Composition is skewed to basic and acidic residues over residues Glu-388 to Gln-404 and Gly-412 to Arg-506. Residues Glu-388–Arg-506 form a disordered region.

Belongs to the cyclophilin-type PPIase family. In terms of assembly, component of the BZR1 complex. Interacts with NRPB1 (via CTD domain), SCL28, SCL30, SCL30A, SCL33, SC35, SR30, SR34, RSZ21, RS2Z33, RS31 and RS40. In terms of tissue distribution, ubiquitous.

The protein resides in the nucleus. It carries out the reaction [protein]-peptidylproline (omega=180) = [protein]-peptidylproline (omega=0). Its function is as follows. PPIases accelerate the folding of proteins. It catalyzes the cis-trans isomerization of proline imidic peptide bonds in oligopeptides. Influences somehow regulation of RNA pol II (CTD) phosphorylation. Binds RNA with preferences for GC-rich sequences. Probably involved in activities connecting transcription and pre-mRNA processing. Involved in brassinostroid response. This Arabidopsis thaliana (Mouse-ear cress) protein is Peptidyl-prolyl cis-trans isomerase CYP59 (CYP59).